Here is a 332-residue protein sequence, read N- to C-terminus: 4-hydroxythreonine-4-phosphate dehydrogenase (332 aa).

Positions 136 and 137 each coordinate substrate. 3 residues coordinate a divalent metal cation: His-166, His-211, and His-266. The substrate site is built by Lys-274, Asn-283, and Arg-292.

This sequence belongs to the PdxA family. In terms of assembly, homodimer. Zn(2+) serves as cofactor. Mg(2+) is required as a cofactor. The cofactor is Co(2+).

The protein localises to the cytoplasm. It catalyses the reaction 4-(phosphooxy)-L-threonine + NAD(+) = 3-amino-2-oxopropyl phosphate + CO2 + NADH. It participates in cofactor biosynthesis; pyridoxine 5'-phosphate biosynthesis; pyridoxine 5'-phosphate from D-erythrose 4-phosphate: step 4/5. Catalyzes the NAD(P)-dependent oxidation of 4-(phosphooxy)-L-threonine (HTP) into 2-amino-3-oxo-4-(phosphooxy)butyric acid which spontaneously decarboxylates to form 3-amino-2-oxopropyl phosphate (AHAP). This is 4-hydroxythreonine-4-phosphate dehydrogenase from Wigglesworthia glossinidia brevipalpis.